The primary structure comprises 450 residues: Ribosomal protein uS12 methylthiotransferase RimO (450 aa).

The MTTase N-terminal domain maps to 9–124 (NRINVVTLGC…LLSALEADYK (116 aa)). [4Fe-4S] cluster-binding residues include Cys18, Cys53, Cys87, Cys148, Cys152, and Cys155. The Radical SAM core domain occupies 134–365 (TTPKNYAYLK…EIQSQISWEL (232 aa)). A TRAM domain is found at 367 to 434 (QQKIGEVFNV…DFDLYGEPLN (68 aa)).

It belongs to the methylthiotransferase family. RimO subfamily. [4Fe-4S] cluster serves as cofactor.

It is found in the cytoplasm. The catalysed reaction is L-aspartate(89)-[ribosomal protein uS12]-hydrogen + (sulfur carrier)-SH + AH2 + 2 S-adenosyl-L-methionine = 3-methylsulfanyl-L-aspartate(89)-[ribosomal protein uS12]-hydrogen + (sulfur carrier)-H + 5'-deoxyadenosine + L-methionine + A + S-adenosyl-L-homocysteine + 2 H(+). Functionally, catalyzes the methylthiolation of an aspartic acid residue of ribosomal protein uS12. This is Ribosomal protein uS12 methylthiotransferase RimO from Christiangramia forsetii (strain DSM 17595 / CGMCC 1.15422 / KT0803) (Gramella forsetii).